Here is a 225-residue protein sequence, read N- to C-terminus: Uracil-DNA glycosylase (225 aa).

D64 acts as the Proton acceptor in catalysis.

The protein belongs to the uracil-DNA glycosylase (UDG) superfamily. UNG family.

Its subcellular location is the cytoplasm. The enzyme catalyses Hydrolyzes single-stranded DNA or mismatched double-stranded DNA and polynucleotides, releasing free uracil.. Its function is as follows. Excises uracil residues from the DNA which can arise as a result of misincorporation of dUMP residues by DNA polymerase or due to deamination of cytosine. The chain is Uracil-DNA glycosylase from Lachnoclostridium phytofermentans (strain ATCC 700394 / DSM 18823 / ISDg) (Clostridium phytofermentans).